An 835-amino-acid polypeptide reads, in one-letter code: Beta-galactosidase (835 aa).

The signal sequence occupies residues 1-22; that stretch reads MGFWMAMLLMLLLCLWVSCGIA. Glutamate 180 (proton donor) is an active-site residue. The active-site Nucleophile is glutamate 249. An SUEL-type lectin domain is found at 749 to 835; sequence RPLRPKAHLK…KKLSVEAICS (87 aa).

The protein belongs to the glycosyl hydrolase 35 family.

The enzyme catalyses Hydrolysis of terminal non-reducing beta-D-galactose residues in beta-D-galactosides.. Its function is as follows. Involved in cell wall degradation. Degrades polysaccharides containing beta-(1--&gt;4)-linked galactans, acting as an exo-(1--&gt;4)-beta-D-galactanase. The sequence is that of Beta-galactosidase from Solanum lycopersicum (Tomato).